Here is a 240-residue protein sequence, read N- to C-terminus: Ribosomal RNA small subunit methyltransferase G (240 aa).

Residues Gly80, Phe85, Asp103 to Ser105, Ala131 to Glu132, and Arg150 contribute to the S-adenosyl-L-methionine site.

Belongs to the methyltransferase superfamily. RNA methyltransferase RsmG family.

Its subcellular location is the cytoplasm. Functionally, specifically methylates the N7 position of a guanine in 16S rRNA. This Thermoanaerobacter sp. (strain X514) protein is Ribosomal RNA small subunit methyltransferase G.